The sequence spans 500 residues: Ent-kaurene oxidase P450-4 (500 aa).

A helical membrane pass occupies residues 6–26 (VHWLIYVAFGAWLCSYVIHVL). Asparagine 240 is a glycosylation site (N-linked (GlcNAc...) asparagine). Cysteine 441 serves as a coordination point for heme. Asparagine 475 carries N-linked (GlcNAc...) asparagine glycosylation.

Belongs to the cytochrome P450 family. It depends on heme as a cofactor.

The protein resides in the membrane. The enzyme catalyses ent-kaur-16-ene + 3 reduced [NADPH--hemoprotein reductase] + 3 O2 = ent-kaur-16-en-19-oate + 3 oxidized [NADPH--hemoprotein reductase] + 4 H2O + 4 H(+). It participates in plant hormone biosynthesis; gibberellin biosynthesis. Ent-kaurene oxidase; part of the gene cluster that mediates the biosynthesis of gibberellins (GAs), diterpenoids that may provide a selective advantage during infection of the preferred host plant, rice. Gibberellins (GAs) are diterpenoids and are synthesized via the mevalonate pathway. Biosynthesis of the major metabolite GA3 (gibberellic acid) from geranylgeranyl diphosphate (GGPP) requires 13 steps. The GGPP produced by the geranylgeranyl diphosphate synthase GGS2 is converted to ent-kaurene via ent-copalyldiphosphate in a two-step cyclization reaction performed by the bifunctional ent-copalyl diphosphate synthase/ent-kaurene synthase enzyme (CPS/KS). Ent-Kaurene is metabolized to GAs by a series of oxidation reactions catalyzed by cytochrome P450 monooxygenases. Cytochrome P450 monooxygenase P450-4 is an ent-kaurene oxidase that catalyzes the three oxidation steps between ent-kaurene and ent-kaurenoic acid. The highly multifunctional cytochrome P450 monooxygenase P450-1 then catalyzes four steps involving oxidation at two carbon atoms, in the main pathway from ent-kaurenoic acid to GA14 via GA12-aldehyde as well as producing kaurenolides and fujenoic acids as by-products. The cytochrome P450 monooxygenase P450-2 then converts GA14 to GA4 by removal of C-20. GA4 is further converted to GA7 by the GA4 desaturase DES via 1,2-desaturation before cytochrome P450 monooxygenase P450-3, a 13-hydroxylase, hydroxylates GA7 to GA3, the final product of the GA-biosynthetic pathway. The protein is Ent-kaurene oxidase P450-4 of Gibberella fujikuroi (strain CBS 195.34 / IMI 58289 / NRRL A-6831) (Bakanae and foot rot disease fungus).